The sequence spans 362 residues: MDVHLFDYAEPGNYSDINWPCNSSDCIVVDTVQCPTMPNKNVLLYTLSFIYIFIFVIGMIANSVVVWVNIQAKTTGYDTHCYILNLAIADLWVVITIPVWVVSLVQHNQWPMGELTCKITHLIFSINLFGSIFFLACMSVDRYLSITYFTGTSSYKKKMVRRVVCILVWLLAFFVSLPDTYYLKTVTSASNNETYCRSFYPEHSIKEWLIGMELVSVILGFAVPFTIIAIFYFLLARAMSASGDQEKHSSRKIIFSYVVVFLVCWLPYHFVVLLDIFSILHYIPFTCQLENVLFTALHVTQCLSLVHCCVNPVLYSFINRNYRYELMKAFIFKYSAKTGLTKLIDASRVSETEYSALEQNTK.

Residues 1–47 (MDVHLFDYAEPGNYSDINWPCNSSDCIVVDTVQCPTMPNKNVLLYTL) are Extracellular-facing. Asparagine 13 and asparagine 22 each carry an N-linked (GlcNAc...) asparagine glycan. A helical transmembrane segment spans residues 48 to 68 (SFIYIFIFVIGMIANSVVVWV). Topologically, residues 69–81 (NIQAKTTGYDTHC) are cytoplasmic. The chain crosses the membrane as a helical span at residues 82 to 102 (YILNLAIADLWVVITIPVWVV). The Extracellular segment spans residues 103–118 (SLVQHNQWPMGELTCK). An intrachain disulfide couples cysteine 117 to cysteine 196. Residues 119–139 (ITHLIFSINLFGSIFFLACMS) traverse the membrane as a helical segment. Topologically, residues 140 to 162 (VDRYLSITYFTGTSSYKKKMVRR) are cytoplasmic. The helical transmembrane segment at 163–183 (VVCILVWLLAFFVSLPDTYYL) threads the bilayer. At 184–213 (KTVTSASNNETYCRSFYPEHSIKEWLIGME) the chain is on the extracellular side. Residues 214 to 234 (LVSVILGFAVPFTIIAIFYFL) traverse the membrane as a helical segment. Topologically, residues 235-252 (LARAMSASGDQEKHSSRK) are cytoplasmic. Residues 253–273 (IIFSYVVVFLVCWLPYHFVVL) form a helical membrane-spanning segment. Residues 274–296 (LDIFSILHYIPFTCQLENVLFTA) lie on the Extracellular side of the membrane. The chain crosses the membrane as a helical span at residues 297 to 319 (LHVTQCLSLVHCCVNPVLYSFIN). The Cytoplasmic portion of the chain corresponds to 320–362 (RNYRYELMKAFIFKYSAKTGLTKLIDASRVSETEYSALEQNTK). The interval 324-362 (YELMKAFIFKYSAKTGLTKLIDASRVSETEYSALEQNTK) is C-terminal cytoplasmic tail. 3 positions are modified to phosphoserine: serine 347, serine 350, and serine 355.

Belongs to the G-protein coupled receptor 1 family. Atypical chemokine receptor subfamily. As to quaternary structure, homodimer. Can form heterodimers with CXCR4; heterodimerization may regulate CXCR4 signaling activity. Interacts with ARRB1 and ARRB2. The Ser/Thr residues in the C-terminal cytoplasmic tail may be phosphorylated. In terms of processing, ubiquitinated at the Lys residues in its C-terminal cytoplasmic tail and is essential for correct trafficking from and to the cell membrane. Deubiquitinated by CXCL12-stimulation in a reversible manner. Not detected in blood, liver, lung and heart, but high expression detected in several tumor cell lines (at protein level). Expressed in heart, spleen, kidney, lung, ovary, brain, testis, astrocytes, neutrophils and B-lymphocytes.

It localises to the cell membrane. The protein resides in the early endosome. Its subcellular location is the recycling endosome. Atypical chemokine receptor that controls chemokine levels and localization via high-affinity chemokine binding that is uncoupled from classic ligand-driven signal transduction cascades, resulting instead in chemokine sequestration, degradation, or transcytosis. Also known as interceptor (internalizing receptor) or chemokine-scavenging receptor or chemokine decoy receptor. Acts as a receptor for chemokines CXCL11 and CXCL12/SDF1. Chemokine binding does not activate G-protein-mediated signal transduction but instead induces beta-arrestin recruitment, leading to ligand internalization and activation of MAPK signaling pathway. Required for regulation of CXCR4 protein levels in migrating interneurons, thereby adapting their chemokine responsiveness. In glioma cells, transduces signals via MEK/ERK pathway, mediating resistance to apoptosis. Promotes cell growth and survival. Not involved in cell migration, adhesion or proliferation of normal hematopoietic progenitors but activated by CXCL11 in malignant hemapoietic cells, leading to phosphorylation of ERK1/2 (MAPK3/MAPK1) and enhanced cell adhesion and migration. Plays a regulatory role in CXCR4-mediated activation of cell surface integrins by CXCL12. Required for heart valve development. Regulates axon guidance in the oculomotor system through the regulation of CXCL12 levels. The sequence is that of Atypical chemokine receptor 3 from Mus musculus (Mouse).